Here is a 261-residue protein sequence, read N- to C-terminus: Protein phosphatase inhibitor 2 (261 aa).

The segment covering 1–16 (MNKDEEFLEEHHYKDD) has biased composition (basic and acidic residues). The required for binding to pppB stretch occupies residues 1–150 (MNKDEEFLEE…TPYHYYESEE (150 aa)). Residues 1–261 (MNKDEEFLEE…LNANLSDDEQ (261 aa)) are disordered. Residues 17–60 (DAIEGEEEQGEEEESDLDDDMYNIDGETNDDDDDDEAEDEESSE) are compositionally biased toward acidic residues. Residues 123-134 (LTINDMNKSSTM) show a composition bias toward polar residues. The stretch at 150-242 (EETDESKKYL…KKFDNLRKAH (93 aa)) forms a coiled coil. Basic and acidic residues predominate over residues 154–163 (ESKKYLENKF). A compositionally biased stretch (basic residues) spans 195-206 (DKKKKKKNLKIH). Residues 212-225 (DDNDDNEDEDEDET) show a composition bias toward acidic residues. Positions 226–250 (EEKKENKKKFDNLRKAHYNEFKVVR) are enriched in basic and acidic residues.

This sequence belongs to the protein phosphatase inhibitor 2 family. In terms of assembly, interacts with pppB.

In terms of biological role, inhibitor of protein-phosphatase 1 (PP1). The chain is Protein phosphatase inhibitor 2 (dpiA) from Dictyostelium discoideum (Social amoeba).